We begin with the raw amino-acid sequence, 447 residues long: Adenylosuccinate synthetase (447 aa).

GTP-binding positions include 12–18 and 40–42; these read GDEGKGK and GHT. Catalysis depends on aspartate 13, which acts as the Proton acceptor. The Mg(2+) site is built by aspartate 13 and glycine 40. IMP contacts are provided by residues 13–16, 38–41, threonine 128, arginine 142, glutamine 223, threonine 238, and arginine 302; these read DEGK and NAGH. Residue histidine 41 is the Proton donor of the active site. Residue 298 to 304 coordinates substrate; it reads TTTGRRR. Residues arginine 304, 330–332, and 412–414 each bind GTP; these read KLD and SLG.

Belongs to the adenylosuccinate synthetase family. Homodimer. Mg(2+) is required as a cofactor.

It is found in the cytoplasm. The enzyme catalyses IMP + L-aspartate + GTP = N(6)-(1,2-dicarboxyethyl)-AMP + GDP + phosphate + 2 H(+). It participates in purine metabolism; AMP biosynthesis via de novo pathway; AMP from IMP: step 1/2. In terms of biological role, plays an important role in the de novo pathway of purine nucleotide biosynthesis. Catalyzes the first committed step in the biosynthesis of AMP from IMP. In Microcystis aeruginosa (strain NIES-843 / IAM M-2473), this protein is Adenylosuccinate synthetase.